Reading from the N-terminus, the 335-residue chain is Putative T-box protein 7 (335 aa).

The T-box DNA-binding region spans 73–246; that stretch reads LWSTFLECGT…NNPFAKGFRN (174 aa).

It localises to the nucleus. This Caenorhabditis elegans protein is Putative T-box protein 7.